We begin with the raw amino-acid sequence, 319 residues long: Aliphatic sulfonates import ATP-binding protein SsuB 1 (319 aa).

An ABC transporter domain is found at 63–282 (VTLSGVSKRF…ARASAAFAAL (220 aa)). 95 to 102 (GRSGCGKS) provides a ligand contact to ATP.

It belongs to the ABC transporter superfamily. Aliphatic sulfonates importer (TC 3.A.1.17.2) family. As to quaternary structure, the complex is composed of two ATP-binding proteins (SsuB), two transmembrane proteins (SsuC) and a solute-binding protein (SsuA).

It localises to the cell inner membrane. It carries out the reaction ATP + H2O + aliphatic sulfonate-[sulfonate-binding protein]Side 1 = ADP + phosphate + aliphatic sulfonateSide 2 + [sulfonate-binding protein]Side 1.. Part of the ABC transporter complex SsuABC involved in aliphatic sulfonates import. Responsible for energy coupling to the transport system. This is Aliphatic sulfonates import ATP-binding protein SsuB 1 from Burkholderia lata (strain ATCC 17760 / DSM 23089 / LMG 22485 / NCIMB 9086 / R18194 / 383).